Consider the following 183-residue polypeptide: Inner membrane-spanning protein YciB (183 aa).

5 consecutive transmembrane segments (helical) span residues 19–39 (LYGV…QLIV), 53–73 (IMGI…DLNF), 76–96 (WKVT…QFVF), 121–141 (LGWA…SYYF), and 151–171 (TFGF…YLYP).

The protein belongs to the YciB family.

It localises to the cell inner membrane. In terms of biological role, plays a role in cell envelope biogenesis, maintenance of cell envelope integrity and membrane homeostasis. This Actinobacillus pleuropneumoniae serotype 5b (strain L20) protein is Inner membrane-spanning protein YciB.